Here is a 253-residue protein sequence, read N- to C-terminus: 5'-nucleotidase SurE (253 aa).

A divalent metal cation contacts are provided by D8, D9, S39, and N95.

It belongs to the SurE nucleotidase family. The cofactor is a divalent metal cation.

It is found in the cytoplasm. It carries out the reaction a ribonucleoside 5'-phosphate + H2O = a ribonucleoside + phosphate. In terms of biological role, nucleotidase that shows phosphatase activity on nucleoside 5'-monophosphates. The protein is 5'-nucleotidase SurE of Chloroflexus aggregans (strain MD-66 / DSM 9485).